Here is a 388-residue protein sequence, read N- to C-terminus: Cytochrome b (388 aa).

A run of 4 helical transmembrane segments spans residues 32-52 (FGSLLGFCLVIQIVTGVTLAM), 76-98 (WLIRYLHSNTASAFFFLVYLHVG), 113-133 (TWTIGTIILVLMMATAFLGYV), and 179-199 (FFALHFVLPFVLAALVLMHLI). The heme b site is built by histidine 82 and histidine 96. Positions 183 and 197 each coordinate heme b. Histidine 202 is a binding site for a ubiquinone. 4 helical membrane-spanning segments follow: residues 226–246 (FIFKDLITIFLFIIVLSIFIF), 290–310 (LLGVIAMFSAILIIMIMPITD), 322–342 (LSKITFYIFVANFLVLMQLGA), and 349–369 (FIEFGQISTVLYFSHFLIIVP).

Belongs to the cytochrome b family. Fungal cytochrome b-c1 complex contains 10 subunits; 3 respiratory subunits, 2 core proteins and 5 low-molecular weight proteins. Cytochrome b-c1 complex is a homodimer. The cofactor is heme b.

Its subcellular location is the mitochondrion inner membrane. Component of the ubiquinol-cytochrome c reductase complex (complex III or cytochrome b-c1 complex) that is part of the mitochondrial respiratory chain. The b-c1 complex mediates electron transfer from ubiquinol to cytochrome c. Contributes to the generation of a proton gradient across the mitochondrial membrane that is then used for ATP synthesis. This Zymoseptoria tritici (Speckled leaf blotch fungus) protein is Cytochrome b (cob).